Here is a 66-residue protein sequence, read N- to C-terminus: Conotoxin Cl14.1a (66 aa).

Residues 1–19 form the signal peptide; it reads MNVTAMFIVLLLTMPLTDG. Positions 20 to 49 are excised as a propeptide; the sequence is FNIRAINGGELFGLVQRDAGNALDHGFYRR.

The protein belongs to the conotoxin L superfamily. Contains 2 disulfide bonds. As to expression, expressed by the venom duct.

The protein resides in the secreted. Its function is as follows. Probable neurotoxin with unknown target. Possibly targets ion channels. This peptide could be considered as an apoptosis activator in some cancers (tested on lung and breast cancer cell lines). Provokes the decrease of H1299 lung cancer cells viability after 24 hours treatment, and induces a high Bax/Bcl-2 ratio, which suggests that this peptide can activate apoptosis in H1299 cells. In addition, H1299 and H1437 lung cancer cell lines treated with this peptide have decreased cell viability, activated caspases, and reduced expression of the pro-survival protein NF-kappa-B (NFKB1), indicating activation of apoptosis. In synergy with MicroRNA-101-3p, this synthetic peptide inhibits breast cancer cells (SK-BR-3 and MCF-7) migration, invasion, and proliferation through suppressing the expression of the methyltransferase EZH2. In parallel, this synergy treatment is able to promote the apoptosis of breast cancer cells. Against microbes, this synthetic toxin (at micromolar concentrations) lowers viability and inhibits host cell invasion by the opportunistic parasite Toxoplasma gondii (tachyzoite form). In addition, it permits T.gondii intracellular replication to decrease while viability of the host cell is unaffected. The polypeptide is Conotoxin Cl14.1a (Californiconus californicus (California cone)).